Consider the following 524-residue polypeptide: Na(+)/H(+) antiporter NhaB (524 aa).

A run of 9 helical transmembrane segments spans residues 13-33 (FLGN…IINP), 98-118 (LLLV…LFVF), 140-160 (AFLS…SVSV), 239-259 (FFIR…LVCL), 304-324 (AIIG…VGLV), 325-345 (GLSV…HSLG), 358-378 (LTVF…TPII), 448-468 (ATPN…APLI), and 479-499 (ALPY…FLLV).

The protein belongs to the NhaB Na(+)/H(+) (TC 2.A.34) antiporter family.

It is found in the cell inner membrane. It carries out the reaction 2 Na(+)(in) + 3 H(+)(out) = 2 Na(+)(out) + 3 H(+)(in). In terms of biological role, na(+)/H(+) antiporter that extrudes sodium in exchange for external protons. The sequence is that of Na(+)/H(+) antiporter NhaB from Yersinia pestis (strain Pestoides F).